The chain runs to 951 residues: Valine--tRNA ligase (951 aa).

Positions 42-52 (PNVTGSLHMGH) match the 'HIGH' region motif. The short motif at 554–558 (KMSKS) is the 'KMSKS' region element. An ATP-binding site is contributed by K557. Residues 882-944 (LINKDDELAR…AEAKAKLIEQ (63 aa)) are a coiled coil.

It belongs to the class-I aminoacyl-tRNA synthetase family. ValS type 1 subfamily. Monomer.

It localises to the cytoplasm. It carries out the reaction tRNA(Val) + L-valine + ATP = L-valyl-tRNA(Val) + AMP + diphosphate. In terms of biological role, catalyzes the attachment of valine to tRNA(Val). As ValRS can inadvertently accommodate and process structurally similar amino acids such as threonine, to avoid such errors, it has a 'posttransfer' editing activity that hydrolyzes mischarged Thr-tRNA(Val) in a tRNA-dependent manner. The chain is Valine--tRNA ligase from Salmonella choleraesuis (strain SC-B67).